Here is a 236-residue protein sequence, read N- to C-terminus: Eukaryotic translation initiation factor 3 subunit J (236 aa).

Residues Met-1 to Ala-86 form a disordered region. Acidic residues predominate over residues Gly-28–Lys-46. Composition is skewed to basic and acidic residues over residues Asp-47–Val-58 and Ala-68–Ala-86. A coiled-coil region spans residues Lys-61 to Thr-115.

It belongs to the eIF-3 subunit J family. Component of the eukaryotic translation initiation factor 3 (eIF-3) complex. The eIF-3 complex interacts with pix.

Its subcellular location is the cytoplasm. Functionally, component of the eukaryotic translation initiation factor 3 (eIF-3) complex, which is involved in protein synthesis of a specialized repertoire of mRNAs and, together with other initiation factors, stimulates binding of mRNA and methionyl-tRNAi to the 40S ribosome. The eIF-3 complex specifically targets and initiates translation of a subset of mRNAs involved in cell proliferation. The chain is Eukaryotic translation initiation factor 3 subunit J from Drosophila mojavensis (Fruit fly).